The sequence spans 352 residues: Transcription factor RSL2 (352 aa).

A compositionally biased stretch (polar residues) spans 160 to 169; sequence SVTTTKSLTG. A disordered region spans residues 160–277; the sequence is SVTTTKSLTG…ASRGAATDPQ (118 aa). Positions 183–192 are enriched in basic residues; sequence KRARVNKRAQ. The span at 223-232 shows a compositional bias: polar residues; that stretch reads SRQNSSTTFC. Residues 272 to 285 are basic motif; it reads AATDPQSLYARKRR. The 50-residue stretch at 272–321 folds into the bHLH domain; sequence AATDPQSLYARKRRERINERLRILQNLVPNGTKVDISTMLEEAVHYVKFL. The helix-loop-helix motif stretch occupies residues 286–321; the sequence is ERINERLRILQNLVPNGTKVDISTMLEEAVHYVKFL.

In terms of assembly, homodimer. As to expression, expressed in roots. Expressed in root epidermal hair cells.

The protein localises to the nucleus. Transcription factor involved in the regulation of root hair elongation. Does not seem to be a direct transcriptional target of RHD6 and RSL1. Involved in the regulation of root hair elongation in response to low phosphate. This is Transcription factor RSL2 from Arabidopsis thaliana (Mouse-ear cress).